Here is a 283-residue protein sequence, read N- to C-terminus: Elongation factor Ts (283 aa).

The segment at 80–83 is involved in Mg(2+) ion dislocation from EF-Tu; sequence TDFV.

This sequence belongs to the EF-Ts family.

The protein localises to the cytoplasm. In terms of biological role, associates with the EF-Tu.GDP complex and induces the exchange of GDP to GTP. It remains bound to the aminoacyl-tRNA.EF-Tu.GTP complex up to the GTP hydrolysis stage on the ribosome. The polypeptide is Elongation factor Ts (Cronobacter sakazakii (strain ATCC BAA-894) (Enterobacter sakazakii)).